We begin with the raw amino-acid sequence, 141 residues long: Small ribosomal subunit protein bS6 (141 aa).

Residues 97–141 (TGQSEMLKAEENRSERRERRDRPEHSDSADGDDGDNSDVSDNADE) are disordered. A compositionally biased stretch (basic and acidic residues) spans 103 to 124 (LKAEENRSERRERRDRPEHSDS). The span at 125 to 141 (ADGDDGDNSDVSDNADE) shows a compositional bias: acidic residues.

This sequence belongs to the bacterial ribosomal protein bS6 family.

Functionally, binds together with bS18 to 16S ribosomal RNA. This chain is Small ribosomal subunit protein bS6, found in Pseudomonas syringae pv. syringae (strain B728a).